A 145-amino-acid polypeptide reads, in one-letter code: Small ribosomal subunit protein uS9 (145 aa).

It belongs to the universal ribosomal protein uS9 family.

The protein resides in the cytoplasm. The protein is Small ribosomal subunit protein uS9 (RPS16) of Gossypium hirsutum (Upland cotton).